Here is an 870-residue protein sequence, read N- to C-terminus: Aldehyde-alcohol dehydrogenase 2 (870 aa).

Cys252 is an active-site residue. Residue 431–436 (GCGSYG) participates in NAD(+) binding.

In the N-terminal section; belongs to the aldehyde dehydrogenase family. This sequence in the C-terminal section; belongs to the iron-containing alcohol dehydrogenase family. Seems to form a rod shaped homomer composed of at least 20 identical subunits. Zn(2+) serves as cofactor. The cofactor is Fe(2+).

It catalyses the reaction a primary alcohol + NAD(+) = an aldehyde + NADH + H(+). The catalysed reaction is a secondary alcohol + NAD(+) = a ketone + NADH + H(+). It carries out the reaction acetaldehyde + NAD(+) + CoA = acetyl-CoA + NADH + H(+). This enzyme has two NAD(+)-dependent activities: ADH and ACDH. May be a critical enzyme in the fermentative pathway. This is Aldehyde-alcohol dehydrogenase 2 (ADH2) from Entamoeba histolytica (strain ATCC 30459 / HM-1:IMSS / ABRM).